The primary structure comprises 211 residues: Uracil phosphoribosyltransferase (211 aa).

5-phospho-alpha-D-ribose 1-diphosphate contacts are provided by residues Arg78, Arg103, and 130–138 (DPMLATGGT). Uracil contacts are provided by residues Ile195 and 200 to 202 (GDA). Residue Asp201 participates in 5-phospho-alpha-D-ribose 1-diphosphate binding.

This sequence belongs to the UPRTase family. Mg(2+) is required as a cofactor.

It catalyses the reaction UMP + diphosphate = 5-phospho-alpha-D-ribose 1-diphosphate + uracil. It participates in pyrimidine metabolism; UMP biosynthesis via salvage pathway; UMP from uracil: step 1/1. Its activity is regulated as follows. Allosterically activated by GTP. Functionally, catalyzes the conversion of uracil and 5-phospho-alpha-D-ribose 1-diphosphate (PRPP) to UMP and diphosphate. The sequence is that of Uracil phosphoribosyltransferase from Kocuria rhizophila (strain ATCC 9341 / DSM 348 / NBRC 103217 / DC2201).